Reading from the N-terminus, the 234-residue chain is Large ribosomal subunit protein uL1 (234 aa).

It belongs to the universal ribosomal protein uL1 family. As to quaternary structure, part of the 50S ribosomal subunit.

Its function is as follows. Binds directly to 23S rRNA. The L1 stalk is quite mobile in the ribosome, and is involved in E site tRNA release. Protein L1 is also a translational repressor protein, it controls the translation of the L11 operon by binding to its mRNA. The polypeptide is Large ribosomal subunit protein uL1 (Maridesulfovibrio salexigens (strain ATCC 14822 / DSM 2638 / NCIMB 8403 / VKM B-1763) (Desulfovibrio salexigens)).